We begin with the raw amino-acid sequence, 245 residues long: 14-3-3 protein zeta/delta (245 aa).

At M1 the chain carries N-acetylmethionine. K3 carries the post-translational modification N6-acetyllysine. Phosphoserine; by PKA is present on S58. Residue K68 is modified to N6-acetyllysine. Phosphoserine occurs at positions 184, 207, and 210. T232 carries the post-translational modification Phosphothreonine; by CK1.

This sequence belongs to the 14-3-3 family. In terms of assembly, homodimer. Heterodimerizes with YWHAE. Homo- and heterodimerization is inhibited by phosphorylation on Ser-58. Interacts with FOXO4, NOXA1, SSH1 ARHGEF2, CDK16 and BSPRY. Interacts with WEE1 (C-terminal). Interacts with MLF1 (phosphorylated form); the interaction retains it in the cytoplasm. Interacts with BAX; the interaction occurs in the cytoplasm. Under stress conditions, MAPK8-mediated phosphorylation releases BAX to mitochondria. Interacts with TP53; the interaction enhances p53 transcriptional activity. The Ser-58 phosphorylated form inhibits this interaction and p53 transcriptional activity. Interacts with ABL1 (phosphorylated form); the interaction retains ABL1 in the cytoplasm. Interacts with PKA-phosphorylated AANAT; the interaction modulates AANAT enzymatic activity by increasing affinity for arylalkylamines and acetyl-CoA and protecting the enzyme from dephosphorylation and proteasomal degradation. It may also prevent thiol-dependent inactivation. Interacts with AKT1; the interaction phosphorylates YWHAZ and modulates dimerization. Interacts with GAB2. Interacts with BCL2L11, SAMSN1 and TLK2. Interacts with phosphorylated RAF1; the interaction is inhibited when YWHAZ is phosphorylated on Thr-232. Interacts with Thr-phosphorylated ITGB2. Interacts with the 'Thr-369' phosphorylated form of DAPK2. Interacts with PI4KB, TBC1D22A and TBC1D22B. Interacts with ZFP36L1 (via phosphorylated form); this interaction occurs in a p38 MAPK- and AKT-signaling pathways. Interacts with SLITRK1. Interacts with AK5, LDB1, MADD, MARK3, PDE1A and SMARCB1. Interacts with YWHAZ. Interacts with MEFV. Interacts with ADAM22 (via C-terminus). In terms of processing, the delta, brain-specific form differs from the zeta form in being phosphorylated. Phosphorylation on Ser-184 by MAPK8; promotes dissociation of BAX and translocation of BAX to mitochondria. Phosphorylation on Thr-232; inhibits binding of RAF1. Phosphorylated on Ser-58 by PKA and protein kinase C delta type catalytic subunit in a sphingosine-dependent fashion. Phosphorylation on Ser-58 by PKA; disrupts homodimerization and heterodimerization with YHAE and TP53.

The protein localises to the cytoplasm. It localises to the melanosome. Adapter protein implicated in the regulation of a large spectrum of both general and specialized signaling pathways. Binds to a large number of partners, usually by recognition of a phosphoserine or phosphothreonine motif. Binding generally results in the modulation of the activity of the binding partner. Promotes cytosolic retention and inactivation of TFEB transcription factor by binding to phosphorylated TFEB. Induces ARHGEF7 activity on RAC1 as well as lamellipodia and membrane ruffle formation. In neurons, regulates spine maturation through the modulation of ARHGEF7 activity. This is 14-3-3 protein zeta/delta (YWHAZ) from Bos taurus (Bovine).